A 150-amino-acid polypeptide reads, in one-letter code: Large ribosomal subunit protein bL9 (150 aa).

The protein belongs to the bacterial ribosomal protein bL9 family.

Its function is as follows. Binds to the 23S rRNA. In Streptococcus agalactiae serotype Ia (strain ATCC 27591 / A909 / CDC SS700), this protein is Large ribosomal subunit protein bL9.